Here is a 334-residue protein sequence, read N- to C-terminus: Small ribosomal subunit protein RACK1z (334 aa).

7 WD repeats span residues 16 to 47 (GHND…LVWD), 73 to 103 (GHSH…RLWD), 115 to 145 (GHDK…KLWN), 163 to 195 (GHNG…KVWN), 207 to 237 (GHGG…LLWD), 248 to 277 (DAGS…KIWD), and 296 to 326 (NQML…RIYK).

It belongs to the WD repeat G protein beta family. Ribosomal protein RACK1 subfamily. As to quaternary structure, interacts with RAC1, RAC3, RAC6, RAR1, SGT1 and RBOHB. Homodimer and heterodimer with RACK1B. Widely expressed.

The protein resides in the cytoplasm. It is found in the cell membrane. Component of the RACK1 regulatory proteins that functions in innate immunity by interacting with multiple proteins in the RAC1 immune complex. Acts as a positive regulator of reactive oxygen species (ROS) production and is required for resistance against rice blast (M.grisea) infection. The chain is Small ribosomal subunit protein RACK1z (RACK1A) from Oryza sativa subsp. japonica (Rice).